Here is a 150-residue protein sequence, read N- to C-terminus: Arginine repressor (150 aa).

It belongs to the ArgR family.

It is found in the cytoplasm. It participates in amino-acid biosynthesis; L-arginine biosynthesis [regulation]. In terms of biological role, regulates arginine biosynthesis genes. This chain is Arginine repressor, found in Clostridium kluyveri (strain NBRC 12016).